A 144-amino-acid polypeptide reads, in one-letter code: Small ribosomal subunit protein eS19B (144 aa).

It belongs to the eukaryotic ribosomal protein eS19 family. As to quaternary structure, component of the small ribosomal subunit (SSU). Mature yeast ribosomes consist of a small (40S) and a large (60S) subunit. The 40S small subunit contains 1 molecule of ribosomal RNA (18S rRNA) and 33 different proteins (encoded by 57 genes). The large 60S subunit contains 3 rRNA molecules (25S, 5.8S and 5S rRNA) and 46 different proteins (encoded by 81 genes).

Its subcellular location is the cytoplasm. In terms of biological role, component of the ribosome, a large ribonucleoprotein complex responsible for the synthesis of proteins in the cell. The small ribosomal subunit (SSU) binds messenger RNAs (mRNAs) and translates the encoded message by selecting cognate aminoacyl-transfer RNA (tRNA) molecules. The large subunit (LSU) contains the ribosomal catalytic site termed the peptidyl transferase center (PTC), which catalyzes the formation of peptide bonds, thereby polymerizing the amino acids delivered by tRNAs into a polypeptide chain. The nascent polypeptides leave the ribosome through a tunnel in the LSU and interact with protein factors that function in enzymatic processing, targeting, and the membrane insertion of nascent chains at the exit of the ribosomal tunnel. eS19 is required for proper maturation of the small (40S) ribosomal subunit. Binds to 40S pre-ribosomal particles, probably required after association of NOC4 but before association of ENP1, TSR1 and RIO2 with 20/21S pre-rRNA. Its function is as follows. Required for proper maturation of the small (40S) ribosomal subunit. Binds to 40s pre-ribosomal particles, probably required after association of NOC4 but before association of ENP1, TSR1 and RIO2 with 20/21S pre-rRNA. This is Small ribosomal subunit protein eS19B from Saccharomyces cerevisiae (strain ATCC 204508 / S288c) (Baker's yeast).